A 370-amino-acid chain; its full sequence is Ferrochelatase (370 aa).

Fe cation-binding residues include H210 and E291.

It belongs to the ferrochelatase family.

Its subcellular location is the cytoplasm. It carries out the reaction heme b + 2 H(+) = protoporphyrin IX + Fe(2+). Its pathway is porphyrin-containing compound metabolism; protoheme biosynthesis; protoheme from protoporphyrin-IX: step 1/1. Functionally, catalyzes the ferrous insertion into protoporphyrin IX. This chain is Ferrochelatase, found in Marinobacter nauticus (strain ATCC 700491 / DSM 11845 / VT8) (Marinobacter aquaeolei).